Consider the following 320-residue polypeptide: Pyrroline-5-carboxylate reductase 2 (320 aa).

At Ser2 the chain carries N-acetylserine. NADP(+)-binding positions include 6 to 11 (IGAGQL) and Ser34. Positions 8, 10, 11, 34, 36, 56, 70, 71, and 97 each coordinate NADPH. NADP(+) contacts are provided by residues Asn56, 69-72 (AVKP), and 95-97 (CAA). Glu164 serves as a coordination point for L-proline. An NADPH-binding site is contributed by Asn230. L-proline contacts are provided by Ala237 and Thr238. Residues 295 to 305 (PTVSTLTPSSP) are compositionally biased toward low complexity. A disordered region spans residues 295–320 (PTVSTLTPSSPGKLLTRSLALGGKKD). A Phosphoserine modification is found at Ser304.

Belongs to the pyrroline-5-carboxylate reductase family. Homodecamer; composed of 5 homodimers. Interacts with LTO1.

It localises to the cytoplasm. It is found in the mitochondrion. The catalysed reaction is L-proline + NADP(+) = (S)-1-pyrroline-5-carboxylate + NADPH + 2 H(+). It carries out the reaction L-proline + NAD(+) = (S)-1-pyrroline-5-carboxylate + NADH + 2 H(+). The protein operates within amino-acid biosynthesis; L-proline biosynthesis; L-proline from L-glutamate 5-semialdehyde: step 1/1. Its function is as follows. Oxidoreductase that catalyzes the last step in proline biosynthesis, which corresponds to the reduction of pyrroline-5-carboxylate to L-proline using NAD(P)H. At physiologic concentrations, has higher specific activity in the presence of NADH. Involved in cellular response to oxidative stress. In some cell types, such as erythrocytes, its primary function may be the generation of NADP(+). The protein is Pyrroline-5-carboxylate reductase 2 (PYCR2) of Macaca fascicularis (Crab-eating macaque).